A 245-amino-acid chain; its full sequence is 1-(5-phosphoribosyl)-5-[(5-phosphoribosylamino)methylideneamino] imidazole-4-carboxamide isomerase (245 aa).

Aspartate 7 functions as the Proton acceptor in the catalytic mechanism. The active-site Proton donor is the aspartate 129.

It belongs to the HisA/HisF family.

Its subcellular location is the cytoplasm. It catalyses the reaction 1-(5-phospho-beta-D-ribosyl)-5-[(5-phospho-beta-D-ribosylamino)methylideneamino]imidazole-4-carboxamide = 5-[(5-phospho-1-deoxy-D-ribulos-1-ylimino)methylamino]-1-(5-phospho-beta-D-ribosyl)imidazole-4-carboxamide. The protein operates within amino-acid biosynthesis; L-histidine biosynthesis; L-histidine from 5-phospho-alpha-D-ribose 1-diphosphate: step 4/9. The sequence is that of 1-(5-phosphoribosyl)-5-[(5-phosphoribosylamino)methylideneamino] imidazole-4-carboxamide isomerase from Alteromonas mediterranea (strain DSM 17117 / CIP 110805 / LMG 28347 / Deep ecotype).